A 370-amino-acid polypeptide reads, in one-letter code: Dihydroorotate dehydrogenase (quinone) (370 aa).

FMN contacts are provided by residues 67-71 (AGFDK) and T91. K71 lines the substrate pocket. 116–120 (NRMGF) lines the substrate pocket. Positions 146 and 179 each coordinate FMN. Position 179 (N179) interacts with substrate. S182 serves as the catalytic Nucleophile. Position 184 (N184) interacts with substrate. K222 and T250 together coordinate FMN. 251–252 (NT) serves as a coordination point for substrate. FMN is bound by residues G276, G305, and 326–327 (YS).

It belongs to the dihydroorotate dehydrogenase family. Type 2 subfamily. As to quaternary structure, monomer. FMN serves as cofactor.

It localises to the cell membrane. It catalyses the reaction (S)-dihydroorotate + a quinone = orotate + a quinol. It participates in pyrimidine metabolism; UMP biosynthesis via de novo pathway; orotate from (S)-dihydroorotate (quinone route): step 1/1. In terms of biological role, catalyzes the conversion of dihydroorotate to orotate with quinone as electron acceptor. This is Dihydroorotate dehydrogenase (quinone) from Streptomyces griseus subsp. griseus (strain JCM 4626 / CBS 651.72 / NBRC 13350 / KCC S-0626 / ISP 5235).